The following is a 389-amino-acid chain: Phosphoglycerate kinase (389 aa).

Substrate-binding positions include 21 to 23, Arg36, 59 to 62, Arg112, and Arg145; these read DLN and HLGR. Residues Lys196, Glu313, and 342 to 345 contribute to the ATP site; that span reads GGDT.

It belongs to the phosphoglycerate kinase family. Monomer.

It is found in the cytoplasm. It carries out the reaction (2R)-3-phosphoglycerate + ATP = (2R)-3-phospho-glyceroyl phosphate + ADP. It functions in the pathway carbohydrate degradation; glycolysis; pyruvate from D-glyceraldehyde 3-phosphate: step 2/5. This chain is Phosphoglycerate kinase, found in Mannheimia succiniciproducens (strain KCTC 0769BP / MBEL55E).